Consider the following 157-residue polypeptide: Cell cycle regulator of non-homologous end joining (157 aa).

Residue M1 is modified to N-acetylmethionine. The KBM motif lies at 1–21; the sequence is METLQSETKTRVLPSWLTAQV. A disordered region spans residues 77-147; it reads KACEQPALAG…SPEEEEEEDV (71 aa). The segment covering 98-107 has biased composition (low complexity); that stretch reads VSPHTSSGSS. The span at 123-136 shows a compositional bias: polar residues; it reads SPSQRPGGSSSACS. Residues 147 to 157 carry the XLM motif; the sequence is VLKYVREIFFS.

In terms of assembly, interacts (via KBM motif) with XRCC5/Ku80 and XRCC6/Ku70 heterodimer. Interacts (via XLF motif) with TRIM28/KAP1, ATM, MRE11, NBN and RAD50. Interacts with splicing factor SF3B1. Interacts with ERCC6L2; this interaction is DNA independent. As to quaternary structure, does not interact with XRCC5/Ku80 and XRCC6/Ku70 heterodimer. Interacts (via KBM motif) with XRCC5/Ku80 and XRCC6/Ku70 heterodimer.

The protein localises to the cytoplasm. Its subcellular location is the nucleus. It is found in the chromosome. In terms of biological role, cell-cycle-specific regulator of classical non-homologous end joining (NHEJ) of DNA double-strand break (DSB) repair, which can act both as an activator or inhibitor of NHEJ, depending on the cell cycle phase. Acts as a regulator of DNA repair pathway choice by specifically inhibiting classical NHEJ during the S and G2 phases, thereby promoting error-free repair by homologous recombination during cell cycle phases when sister chromatids are present. Preferentially protects single-stranded overhangs at break sites by inhibiting classical NHEJ, thereby creating a local environment that favors homologous recombination. Acts via interaction with XRCC5/Ku80 and XRCC6/Ku70. In contrast, acts as an activator of NHEJ during G1 phase of the cell cycle: promotes classical NHEJ in G1 phase cells via multivalent interactions that increase the affinity of DNA damage response proteins for DSB-associated chromatin. Also involved in immunoglobulin V(D)J recombination. May also act as an indirect regulator of proteasome. This is Cell cycle regulator of non-homologous end joining from Homo sapiens (Human).